The chain runs to 95 residues: Aspartyl/glutamyl-tRNA(Asn/Gln) amidotransferase subunit C (95 aa).

The protein belongs to the GatC family. As to quaternary structure, heterotrimer of A, B and C subunits.

The catalysed reaction is L-glutamyl-tRNA(Gln) + L-glutamine + ATP + H2O = L-glutaminyl-tRNA(Gln) + L-glutamate + ADP + phosphate + H(+). It catalyses the reaction L-aspartyl-tRNA(Asn) + L-glutamine + ATP + H2O = L-asparaginyl-tRNA(Asn) + L-glutamate + ADP + phosphate + 2 H(+). Allows the formation of correctly charged Asn-tRNA(Asn) or Gln-tRNA(Gln) through the transamidation of misacylated Asp-tRNA(Asn) or Glu-tRNA(Gln) in organisms which lack either or both of asparaginyl-tRNA or glutaminyl-tRNA synthetases. The reaction takes place in the presence of glutamine and ATP through an activated phospho-Asp-tRNA(Asn) or phospho-Glu-tRNA(Gln). This is Aspartyl/glutamyl-tRNA(Asn/Gln) amidotransferase subunit C from Anaeromyxobacter sp. (strain Fw109-5).